A 151-amino-acid polypeptide reads, in one-letter code: Large ribosomal subunit protein uL22 (151 aa).

It belongs to the universal ribosomal protein uL22 family. In terms of assembly, part of the 50S ribosomal subunit.

This protein binds specifically to 23S rRNA. It makes multiple contacts with different domains of the 23S rRNA in the assembled 50S subunit and ribosome. Its function is as follows. The globular domain of the protein is located near the polypeptide exit tunnel on the outside of the subunit, while an extended beta-hairpin is found that lines the wall of the exit tunnel in the center of the 70S ribosome. This is Large ribosomal subunit protein uL22 from Methanococcoides burtonii (strain DSM 6242 / NBRC 107633 / OCM 468 / ACE-M).